The following is a 460-amino-acid chain: Chromosomal replication initiator protein DnaA 1 (460 aa).

Residues 1 to 68 (MRAWEEFLLL…KSGLVNNNNK (68 aa)) are domain I, interacts with DnaA modulators. Positions 68 to 102 (KPIRVHVTSVDKAAPFYKEKQMQQEKTAYFTMHYG) are domain II. Positions 103–321 (SVNPEMTFSN…HALNLLAKRV (219 aa)) are domain III, AAA+ region. G151, G153, K154, and T155 together coordinate ATP. Residues 322–460 (MYKKLSHQLL…EFFPSEEMII (139 aa)) form a domain IV, binds dsDNA region.

It belongs to the DnaA family. In terms of assembly, oligomerizes as a right-handed, spiral filament on DNA at oriC.

The protein resides in the cytoplasm. In terms of biological role, plays an essential role in the initiation and regulation of chromosomal replication. ATP-DnaA binds to the origin of replication (oriC) to initiate formation of the DNA replication initiation complex once per cell cycle. Binds the DnaA box (a 9 base pair repeat at the origin) and separates the double-stranded (ds)DNA. Forms a right-handed helical filament on oriC DNA; dsDNA binds to the exterior of the filament while single-stranded (ss)DNA is stabiized in the filament's interior. The ATP-DnaA-oriC complex binds and stabilizes one strand of the AT-rich DNA unwinding element (DUE), permitting loading of DNA polymerase. After initiation quickly degrades to an ADP-DnaA complex that is not apt for DNA replication. Binds acidic phospholipids. In Chlamydia pneumoniae (Chlamydophila pneumoniae), this protein is Chromosomal replication initiator protein DnaA 1.